A 255-amino-acid chain; its full sequence is Indole-3-glycerol phosphate synthase (255 aa).

It belongs to the TrpC family.

It catalyses the reaction 1-(2-carboxyphenylamino)-1-deoxy-D-ribulose 5-phosphate + H(+) = (1S,2R)-1-C-(indol-3-yl)glycerol 3-phosphate + CO2 + H2O. The protein operates within amino-acid biosynthesis; L-tryptophan biosynthesis; L-tryptophan from chorismate: step 4/5. The chain is Indole-3-glycerol phosphate synthase from Streptococcus mutans serotype c (strain ATCC 700610 / UA159).